The following is a 742-amino-acid chain: Photosystem I P700 chlorophyll a apoprotein A2 (742 aa).

A run of 8 helical transmembrane segments spans residues 46 to 69 (LFST…FHIA), 135 to 158 (LFQA…LHLQ), 175 to 199 (LNHH…HVAI), 273 to 291 (IAHH…GHMY), 336 to 359 (LHFQ…QHMG), 375 to 401 (SALY…IFFV), 423 to 445 (ALIS…IYVH), and 525 to 543 (FLVH…LILI). Cys567 and Cys576 together coordinate [4Fe-4S] cluster. Transmembrane regions (helical) follow at residues 583-604 (AMYL…YWHW) and 651-673 (LSVW…MFLI). Divinyl chlorophyll a is bound by residues His662, Met670, and Tyr678. Residue Trp679 participates in phylloquinone binding. A helical transmembrane segment spans residues 715–735 (LVGLAHFTIGNILTFGAFVIA).

It belongs to the PsaA/PsaB family. In terms of assembly, the PsaA/B heterodimer binds the P700 divinyl chlorophyll special pair and subsequent electron acceptors. PSI consists of a core antenna complex that captures photons, and an electron transfer chain that converts photonic excitation into a charge separation. The cyanobacterial PSI reaction center is composed of one copy each of PsaA,B,C,D,E,F,I,J,K,L,M and X, and forms trimeric complexes. It depends on PSI electron transfer chain: 5 divinyl chlorophyll a, 1 divinyl chlorophyll a', 2 phylloquinones and 3 4Fe-4S clusters. PSI core antenna: 90 divinyl chlorophyll a, 22 carotenoids, 3 phospholipids and 1 galactolipid. P700 is a divinyl chlorophyll a/divinyl chlorophyll a' dimer, A0 is one or more divinyl chlorophyll a, A1 is one or both phylloquinones and FX is a shared 4Fe-4S iron-sulfur center. as a cofactor.

It localises to the cellular thylakoid membrane. The enzyme catalyses reduced [plastocyanin] + hnu + oxidized [2Fe-2S]-[ferredoxin] = oxidized [plastocyanin] + reduced [2Fe-2S]-[ferredoxin]. Functionally, psaA and PsaB bind P700, the primary electron donor of photosystem I (PSI), as well as the electron acceptors A0, A1 and FX. PSI is a plastocyanin/cytochrome c6-ferredoxin oxidoreductase, converting photonic excitation into a charge separation, which transfers an electron from the donor P700 chlorophyll pair to the spectroscopically characterized acceptors A0, A1, FX, FA and FB in turn. Oxidized P700 is reduced on the lumenal side of the thylakoid membrane by plastocyanin or cytochrome c6. The polypeptide is Photosystem I P700 chlorophyll a apoprotein A2 (Prochlorococcus marinus (strain MIT 9515)).